We begin with the raw amino-acid sequence, 633 residues long: Probable potassium transport system protein Kup 2 (633 aa).

12 helical membrane passes run 18-38 (FVGL…TSPL), 61-81 (LISL…VLFL), 107-127 (VPVL…DAMI), 143-163 (ITPA…IVLF), 176-196 (FFGP…VIHI), 211-231 (ALSF…AVFL), 255-275 (WFVL…ALVL), 293-313 (ALLP…QAVI), 345-365 (IYVP…IFSF), 371-391 (LATA…MLAF), 402-422 (FMLA…FLAA), and 429-449 (DGGW…WTWT).

This sequence belongs to the HAK/KUP transporter (TC 2.A.72) family.

It is found in the cell inner membrane. It carries out the reaction K(+)(in) + H(+)(in) = K(+)(out) + H(+)(out). Functionally, transport of potassium into the cell. Likely operates as a K(+):H(+) symporter. The chain is Probable potassium transport system protein Kup 2 from Rhizobium etli (strain ATCC 51251 / DSM 11541 / JCM 21823 / NBRC 15573 / CFN 42).